The following is a 100-amino-acid chain: Small ribosomal subunit protein uS14 (100 aa).

It belongs to the universal ribosomal protein uS14 family. Part of the 30S ribosomal subunit. Contacts proteins S3 and S10.

Functionally, binds 16S rRNA, required for the assembly of 30S particles and may also be responsible for determining the conformation of the 16S rRNA at the A site. This chain is Small ribosomal subunit protein uS14, found in Picosynechococcus sp. (strain ATCC 27264 / PCC 7002 / PR-6) (Agmenellum quadruplicatum).